The chain runs to 308 residues: Aspartate carbamoyltransferase catalytic subunit (308 aa).

R57 and T58 together coordinate carbamoyl phosphate. K86 is a binding site for L-aspartate. The carbamoyl phosphate site is built by R107, H135, and Q138. The L-aspartate site is built by R168 and R228. 2 residues coordinate carbamoyl phosphate: L267 and P268.

Belongs to the aspartate/ornithine carbamoyltransferase superfamily. ATCase family. Heterododecamer (2C3:3R2) of six catalytic PyrB chains organized as two trimers (C3), and six regulatory PyrI chains organized as three dimers (R2).

The enzyme catalyses carbamoyl phosphate + L-aspartate = N-carbamoyl-L-aspartate + phosphate + H(+). It participates in pyrimidine metabolism; UMP biosynthesis via de novo pathway; (S)-dihydroorotate from bicarbonate: step 2/3. Functionally, catalyzes the condensation of carbamoyl phosphate and aspartate to form carbamoyl aspartate and inorganic phosphate, the committed step in the de novo pyrimidine nucleotide biosynthesis pathway. This is Aspartate carbamoyltransferase catalytic subunit from Leptospira borgpetersenii serovar Hardjo-bovis (strain JB197).